Consider the following 341-residue polypeptide: MKSVTLKELSLLLDGVVQGDETLVINSVATLEHATAGQISFLANSKYRAQLELTQASAVLLSAKDAQDYSGTALVVKDPYVGFARVAQLLDTTPKAAIGIHPSAQIDPSALLGEGVAIGANAVIGANVILGENVQIGAGTVIGQDCIIGSNTRLWANVTLYHNVHLGQDCIIHSGAIIGSDGFGYANERGQWIKIPQTGGVRIGDRVEIGASSTIDRGALGHTEIHNGVIIDNQVQVAHNDIIGENTAIAGSTTLAGSVTIGKHCIIGGNCAIAGHLTIADGVHLSGATNVTGNMREPGLYSSATVAMENKVWRKNTVRFRQLDELFQRVKTLEKNSNTPE.

H239 (proton acceptor) is an active-site residue.

The protein belongs to the transferase hexapeptide repeat family. LpxD subfamily. In terms of assembly, homotrimer.

The catalysed reaction is a UDP-3-O-[(3R)-3-hydroxyacyl]-alpha-D-glucosamine + a (3R)-hydroxyacyl-[ACP] = a UDP-2-N,3-O-bis[(3R)-3-hydroxyacyl]-alpha-D-glucosamine + holo-[ACP] + H(+). The protein operates within bacterial outer membrane biogenesis; LPS lipid A biosynthesis. In terms of biological role, catalyzes the N-acylation of UDP-3-O-acylglucosamine using 3-hydroxyacyl-ACP as the acyl donor. Is involved in the biosynthesis of lipid A, a phosphorylated glycolipid that anchors the lipopolysaccharide to the outer membrane of the cell. This is UDP-3-O-acylglucosamine N-acyltransferase from Shewanella sp. (strain MR-4).